Here is a 179-residue protein sequence, read N- to C-terminus: Large ribosomal subunit protein uL10 (179 aa).

The protein belongs to the universal ribosomal protein uL10 family. Part of the ribosomal stalk of the 50S ribosomal subunit. The N-terminus interacts with L11 and the large rRNA to form the base of the stalk. The C-terminus forms an elongated spine to which L12 dimers bind in a sequential fashion forming a multimeric L10(L12)X complex.

In terms of biological role, forms part of the ribosomal stalk, playing a central role in the interaction of the ribosome with GTP-bound translation factors. In Thermotoga neapolitana (strain ATCC 49049 / DSM 4359 / NBRC 107923 / NS-E), this protein is Large ribosomal subunit protein uL10.